Reading from the N-terminus, the 377-residue chain is Chaperone protein DnaJ (377 aa).

In terms of domain architecture, J spans 5–70 (DYYEVLGVGR…NKKAAYDQFG (66 aa)). The CR-type zinc finger occupies 133 to 211 (GLTKELRIPT…CHGDGRVEKT (79 aa)). 8 residues coordinate Zn(2+): cysteine 146, cysteine 149, cysteine 163, cysteine 166, cysteine 185, cysteine 188, cysteine 199, and cysteine 202. 4 CXXCXGXG motif repeats span residues 146–153 (CDVCDGSG), 163–170 (CGTCHGQG), 185–192 (CPTCHGRG), and 199–206 (CTKCHGDG).

This sequence belongs to the DnaJ family. Homodimer. Requires Zn(2+) as cofactor.

It localises to the cytoplasm. Participates actively in the response to hyperosmotic and heat shock by preventing the aggregation of stress-denatured proteins and by disaggregating proteins, also in an autonomous, DnaK-independent fashion. Unfolded proteins bind initially to DnaJ; upon interaction with the DnaJ-bound protein, DnaK hydrolyzes its bound ATP, resulting in the formation of a stable complex. GrpE releases ADP from DnaK; ATP binding to DnaK triggers the release of the substrate protein, thus completing the reaction cycle. Several rounds of ATP-dependent interactions between DnaJ, DnaK and GrpE are required for fully efficient folding. Also involved, together with DnaK and GrpE, in the DNA replication of plasmids through activation of initiation proteins. The chain is Chaperone protein DnaJ from Shewanella sp. (strain MR-4).